Reading from the N-terminus, the 190-residue chain is GTP cyclohydrolase 1 (190 aa).

C80, H83, and C151 together coordinate Zn(2+).

This sequence belongs to the GTP cyclohydrolase I family. In terms of assembly, toroid-shaped homodecamer, composed of two pentamers of five dimers.

The catalysed reaction is GTP + H2O = 7,8-dihydroneopterin 3'-triphosphate + formate + H(+). Its pathway is cofactor biosynthesis; 7,8-dihydroneopterin triphosphate biosynthesis; 7,8-dihydroneopterin triphosphate from GTP: step 1/1. The sequence is that of GTP cyclohydrolase 1 from Rickettsia akari (strain Hartford).